Reading from the N-terminus, the 296-residue chain is Glycine N-acyltransferase (296 aa).

N6-acetyllysine; alternate is present on residues Lys16, Lys127, and Lys141. Residues Lys16, Lys127, and Lys141 each carry the N6-succinyllysine; alternate modification. N6-acetyllysine is present on Lys159. Lys169 bears the N6-succinyllysine mark. Residues Lys183 and Lys256 each carry the N6-acetyllysine; alternate modification. Residues Lys183 and Lys256 each carry the N6-succinyllysine; alternate modification.

Belongs to the glycine N-acyltransferase family.

The protein localises to the mitochondrion. It carries out the reaction an acyl-CoA + glycine = an N-acylglycine + CoA + H(+). The enzyme catalyses benzoyl-CoA + glycine = N-benzoylglycine + CoA + H(+). Mitochondrial acyltransferase which transfers an acyl group to the N-terminus of glycine and glutamine, although much less efficiently. Can conjugate a multitude of substrates to form a variety of N-acylglycines, thereby detoxify xenobiotics, such as benzoic acid or salicylic acid, and endogenous organic acids, such as isovaleric acid. The sequence is that of Glycine N-acyltransferase (GLYAT) from Pongo abelii (Sumatran orangutan).